The chain runs to 231 residues: 5'-methylthioadenosine/S-adenosylhomocysteine nucleosidase (231 aa).

Residue Glu12 is the Proton acceptor of the active site. Substrate contacts are provided by residues Gly78, Met153, and 174 to 175; that span reads ME. Residue Asp198 is the Proton donor of the active site.

The protein belongs to the PNP/UDP phosphorylase family. MtnN subfamily.

The enzyme catalyses S-adenosyl-L-homocysteine + H2O = S-(5-deoxy-D-ribos-5-yl)-L-homocysteine + adenine. It catalyses the reaction S-methyl-5'-thioadenosine + H2O = 5-(methylsulfanyl)-D-ribose + adenine. The catalysed reaction is 5'-deoxyadenosine + H2O = 5-deoxy-D-ribose + adenine. It participates in amino-acid biosynthesis; L-methionine biosynthesis via salvage pathway; S-methyl-5-thio-alpha-D-ribose 1-phosphate from S-methyl-5'-thioadenosine (hydrolase route): step 1/2. Its function is as follows. Catalyzes the irreversible cleavage of the glycosidic bond in both 5'-methylthioadenosine (MTA) and S-adenosylhomocysteine (SAH/AdoHcy) to adenine and the corresponding thioribose, 5'-methylthioribose and S-ribosylhomocysteine, respectively. Also cleaves 5'-deoxyadenosine, a toxic by-product of radical S-adenosylmethionine (SAM) enzymes, into 5-deoxyribose and adenine. The polypeptide is 5'-methylthioadenosine/S-adenosylhomocysteine nucleosidase (Bacillus pumilus (strain SAFR-032)).